Reading from the N-terminus, the 355-residue chain is Uroporphyrinogen decarboxylase (355 aa).

Substrate-binding positions include 27–31 (RQAGR), D78, Y155, S210, and H328.

The protein belongs to the uroporphyrinogen decarboxylase family. As to quaternary structure, homodimer.

It localises to the cytoplasm. The enzyme catalyses uroporphyrinogen III + 4 H(+) = coproporphyrinogen III + 4 CO2. The protein operates within porphyrin-containing compound metabolism; protoporphyrin-IX biosynthesis; coproporphyrinogen-III from 5-aminolevulinate: step 4/4. Functionally, catalyzes the decarboxylation of four acetate groups of uroporphyrinogen-III to yield coproporphyrinogen-III. The protein is Uroporphyrinogen decarboxylase of Pseudomonas aeruginosa (strain UCBPP-PA14).